The chain runs to 371 residues: Barbiturase 1 (371 aa).

The tract at residues 1–103 (MPDAIEVRKV…TIFATVPPED (103 aa)) is RU A. Residues Arg53 and 82–83 (SG) contribute to the substrate site. The segment at 115–250 (RLTVGFAMSE…AQVVVVGNAP (136 aa)) is RU B. Residue Lys165 is part of the active site. Residues Asn197 and 233 to 234 (SS) contribute to the substrate site. The Nucleophile role is filled by Ser233. Positions 256-371 (YRIGHSVMKD…GPVAAIVDLG (116 aa)) are RU C. Residue Glu304 coordinates Mg(2+). Substrate is bound by residues Lys331 and 350–351 (SV). Ala353, Gln356, Gly357, Pro358, and Gly361 together coordinate Mg(2+).

It belongs to the cyclic amide hydrolase (CyAH) family. Homotetramer.

It carries out the reaction barbiturate + H2O = 3-oxo-3-ureidopropanoate. Its pathway is pyrimidine metabolism; uracil degradation via oxidative pathway; malonate and urea from uracil: step 2/3. With respect to regulation, inhibited by cyanuric acid. In terms of biological role, responsible for the hydrolysis of barbituric acid (2,4,6-trihydroxy-1,3-pyrimidine), an intermediate in the oxidative catabolism of pyrimidines. Catalyzes the hydrolytic opening of the pyrimidine ring of barbituric acid to yield ureidomalonic acid. This is Barbiturase 1 from Nocardioides sp. (strain ATCC BAA-499 / JS614).